We begin with the raw amino-acid sequence, 744 residues long: FHF complex subunit HOOK-interacting protein 2B (744 aa).

2 disordered regions span residues Lys-184–Asp-213 and Leu-510–Gly-530. Over residues Ala-197 to Asp-213 the composition is skewed to basic and acidic residues.

It belongs to the FHIP family. As to expression, expressed in colon.

In terms of biological role, able to activate MAPK/ERK and TGFB signaling pathways. May regulate the activity of genes involved in intestinal barrier function and immunoprotective inflammation. May play a role in cell proliferation. This chain is FHF complex subunit HOOK-interacting protein 2B, found in Mus musculus (Mouse).